The sequence spans 36 residues: Photosystem I reaction center subunit VIII (36 aa).

A helical transmembrane segment spans residues 9-29; the sequence is ILVPLVGLVFPAITMVSLFLY.

The protein belongs to the PsaI family.

Its subcellular location is the plastid. It localises to the chloroplast thylakoid membrane. May help in the organization of the PsaL subunit. In Zygnema circumcarinatum (Green alga), this protein is Photosystem I reaction center subunit VIII.